The following is a 324-amino-acid chain: HSF-like protein (324 aa).

Residues 1-19 (MNSLVALVLLGQIIGSTVS) form the signal peptide. Cystatin fetuin-A-type domains follow at residues 21–130 (QLGP…VKCS) and 141–254 (RDCP…SDCV). Cystine bridges form between Cys-28/Cys-315, Cys-85/Cys-96, Cys-110/Cys-129, Cys-143/Cys-146, Cys-205/Cys-217, and Cys-230/Cys-253. Asn-95 carries an N-linked (GlcNAc...) asparagine glycan. N-linked (GlcNAc...) asparagine glycosylation occurs at Asn-204. Asn-282 carries N-linked (GlcNAc...) asparagine glycosylation.

Belongs to the fetuin family. Homodimer. In terms of tissue distribution, expressed by the liver.

The protein localises to the secreted. In terms of biological role, may not have antihemorrhagic activity. This is HSF-like protein from Protobothrops flavoviridis (Habu).